We begin with the raw amino-acid sequence, 89 residues long: UPF0335 protein OCAR_5086/OCA5_c28780 (89 aa).

It belongs to the UPF0335 family.

This Afipia carboxidovorans (strain ATCC 49405 / DSM 1227 / KCTC 32145 / OM5) (Oligotropha carboxidovorans) protein is UPF0335 protein OCAR_5086/OCA5_c28780.